Here is a 145-residue protein sequence, read N- to C-terminus: Small ribosomal subunit protein uS12A (145 aa).

Proline 64 carries the hydroxyproline modification.

It belongs to the universal ribosomal protein uS12 family.

The protein is Small ribosomal subunit protein uS12A (RPS23A) of Naumovozyma castellii (Yeast).